We begin with the raw amino-acid sequence, 303 residues long: Acetyl-coenzyme A carboxylase carboxyl transferase subunit beta (303 aa).

Positions 29-298 (LWVKCPETGQ…ATPAPASAAA (270 aa)) constitute a CoA carboxyltransferase N-terminal domain.

This sequence belongs to the AccD/PCCB family. As to quaternary structure, acetyl-CoA carboxylase is a heterohexamer composed of biotin carboxyl carrier protein (AccB), biotin carboxylase (AccC) and two subunits each of ACCase subunit alpha (AccA) and ACCase subunit beta (AccD).

The protein resides in the cytoplasm. It carries out the reaction N(6)-carboxybiotinyl-L-lysyl-[protein] + acetyl-CoA = N(6)-biotinyl-L-lysyl-[protein] + malonyl-CoA. It functions in the pathway lipid metabolism; malonyl-CoA biosynthesis; malonyl-CoA from acetyl-CoA: step 1/1. In terms of biological role, component of the acetyl coenzyme A carboxylase (ACC) complex. Biotin carboxylase (BC) catalyzes the carboxylation of biotin on its carrier protein (BCCP) and then the CO(2) group is transferred by the transcarboxylase to acetyl-CoA to form malonyl-CoA. This chain is Acetyl-coenzyme A carboxylase carboxyl transferase subunit beta, found in Methylobacterium sp. (strain 4-46).